Consider the following 331-residue polypeptide: ESX-3 secretion system protein EccE3 (331 aa).

2 helical membrane-spanning segments follow: residues G11–S31 and L37–F57.

The protein belongs to the EccE family. Part of the ESX-3 / type VII secretion system (T7SS), which is composed of cytosolic and membrane components. The ESX-3 membrane complex is composed of EccB3, EccC3, EccD3 and EccE3.

It is found in the cell inner membrane. In terms of biological role, part of the ESX-3 specialized secretion system, which is important for iron and zinc uptake or homeostasis. The polypeptide is ESX-3 secretion system protein EccE3 (Mycobacterium tuberculosis (strain ATCC 25618 / H37Rv)).